The following is a 450-amino-acid chain: Probable 1,4-beta-D-glucan cellobiohydrolase C (450 aa).

The signal sequence occupies residues 1 to 19 (MKHLASSIALTLLLPAVQA). A CBM1 domain is found at 20-55 (QQTVWGQCGGQGWSGPTNCVAGAACSTLNPYYAQCI). Disulfide bonds link Cys27/Cys44 and Cys38/Cys54. The interval 59 to 90 (TATSTTLSTTTTTQTTTKPTTTGPTTSAPTVT) is thr-rich linker. The tract at residues 63–89 (TTLSTTTTTQTTTKPTTTGPTTSAPTV) is disordered. A catalytic region spans residues 91–450 (ASGNPFSGYQ…QLLTNANPSF (360 aa)). Residue Asp180 is part of the active site. Cystine bridges form between Cys181-Cys240 and Cys372-Cys419. Asp226 functions as the Proton donor in the catalytic mechanism. Asp405 (nucleophile) is an active-site residue. Residue Asn409 is glycosylated (N-linked (GlcNAc...) asparagine).

This sequence belongs to the glycosyl hydrolase 6 (cellulase B) family.

It is found in the secreted. The enzyme catalyses Hydrolysis of (1-&gt;4)-beta-D-glucosidic linkages in cellulose and cellotetraose, releasing cellobiose from the non-reducing ends of the chains.. Its function is as follows. The biological conversion of cellulose to glucose generally requires three types of hydrolytic enzymes: (1) Endoglucanases which cut internal beta-1,4-glucosidic bonds; (2) Exocellobiohydrolases that cut the disaccharide cellobiose from the non-reducing end of the cellulose polymer chain; (3) Beta-1,4-glucosidases which hydrolyze the cellobiose and other short cello-oligosaccharides to glucose. In Neosartorya fischeri (strain ATCC 1020 / DSM 3700 / CBS 544.65 / FGSC A1164 / JCM 1740 / NRRL 181 / WB 181) (Aspergillus fischerianus), this protein is Probable 1,4-beta-D-glucan cellobiohydrolase C (cbhC).